The chain runs to 672 residues: DNA ligase (672 aa).

Residues 32–36, 81–82, and Glu113 each bind NAD(+); these read DAEYD and SL. Lys115 (N6-AMP-lysine intermediate) is an active-site residue. 4 residues coordinate NAD(+): Arg136, Glu173, Lys290, and Lys314. Positions 408, 411, 426, and 432 each coordinate Zn(2+). The BRCT domain occupies 592–672; sequence EIDSPFAGKT…EMIRLLGESS (81 aa).

This sequence belongs to the NAD-dependent DNA ligase family. LigA subfamily. Requires Mg(2+) as cofactor. Mn(2+) is required as a cofactor.

The enzyme catalyses NAD(+) + (deoxyribonucleotide)n-3'-hydroxyl + 5'-phospho-(deoxyribonucleotide)m = (deoxyribonucleotide)n+m + AMP + beta-nicotinamide D-nucleotide.. Functionally, DNA ligase that catalyzes the formation of phosphodiester linkages between 5'-phosphoryl and 3'-hydroxyl groups in double-stranded DNA using NAD as a coenzyme and as the energy source for the reaction. It is essential for DNA replication and repair of damaged DNA. This is DNA ligase from Yersinia enterocolitica serotype O:8 / biotype 1B (strain NCTC 13174 / 8081).